We begin with the raw amino-acid sequence, 58 residues long: UPF0434 protein NT01EI_2448 (58 aa).

Belongs to the UPF0434 family.

The protein is UPF0434 protein NT01EI_2448 of Edwardsiella ictaluri (strain 93-146).